The chain runs to 326 residues: Aquaporin-4 (326 aa).

Residues 1–39 (MSDGAGAAARRWGKCGGRSCSRESIMVAFKGVWTQAFWK) are Cytoplasmic-facing. Residues cysteine 15 and cysteine 20 are each lipidated (S-palmitoyl cysteine). The chain crosses the membrane as a helical span at residues 40–60 (AVTAEFLAMLIFVLLSVGSTI). Residues 61–72 (NWGGSENPLPVD) lie on the Extracellular side of the membrane. A helical membrane pass occupies residues 73-92 (MVLISLCFGLSIATMVQCFG). The Cytoplasmic portion of the chain corresponds to 93–96 (HISG). An intramembrane region (discontinuously helical) is located at residues 97–104 (GHINPAVT). The NPA 1 signature appears at 100 to 102 (NPA). Residues 105 to 118 (VAMVCTRKISIAKS) lie on the Cytoplasmic side of the membrane. At serine 114 the chain carries Phosphoserine; by PKG. Residues 119–139 (VFYITAQCLGAIIGAGILYLV) traverse the membrane as a helical segment. The Extracellular segment spans residues 140–158 (TPPNVVGGLGVTTVHGNLT). A glycan (N-linked (GlcNAc...) asparagine) is linked at asparagine 156. Residues 159-179 (AGHGLLVELIITFQLVFTIFA) traverse the membrane as a helical segment. Topologically, residues 180–187 (SCDSKRTD) are cytoplasmic. Serine 183 bears the Phosphoserine; by PKC mark. The chain crosses the membrane as a helical span at residues 188-208 (VTGSIALAIGFSVAIGHLFAI). Residue asparagine 209 is glycosylated (N-linked (GlcNAc...) asparagine). Residues 209-211 (NYT) are Extracellular-facing. Residues 212–225 (GASMNPARSFGPAV) constitute an intramembrane region (discontinuously helical). The NPA 2 motif lies at 216–218 (NPA). The Extracellular portion of the chain corresponds to 226–234 (IMGNWENHW). Residues 235-255 (IYWVGPIIGAVLAGALYEYVF) traverse the membrane as a helical segment. The Cytoplasmic segment spans residues 256-326 (CPDVELKRRL…DSAGEVLSSV (71 aa)). 2 positions are modified to phosphoserine: serine 279 and serine 288. Threonine 292 carries the phosphothreonine modification. Serine 324 bears the Phosphoserine mark.

Belongs to the MIP/aquaporin (TC 1.A.8) family. Homotetramer. The tetramers can form oligomeric arrays in membranes. The size of the oligomers differs between tissues and is smaller in skeletal muscle than in brain. Interaction between AQP4 oligomeric arrays in close-by cells can contribute to cell-cell adhesion. Part of a complex containing MLC1, TRPV4, HEPACAM and ATP1B1. In terms of processing, phosphorylation by PKC at Ser-183 reduces conductance by 50%. Phosphorylation by PKG at Ser-114 in response to glutamate increases conductance by 40%. Isoform Long: Palmitoylated on its N-terminal region.

Its subcellular location is the cell membrane. The protein resides in the basolateral cell membrane. It localises to the endosome membrane. It is found in the sarcolemma. The protein localises to the cell projection. The enzyme catalyses H2O(in) = H2O(out). Forms a water-specific channel. Plays an important role in brain water homeostasis and in glymphatic solute transport. Required for a normal rate of water exchange across the blood brain interface. Required for normal levels of cerebrospinal fluid influx into the brain cortex and parenchyma along paravascular spaces that surround penetrating arteries, and for normal drainage of interstitial fluid along paravenous drainage pathways. Thereby, it is required for normal clearance of solutes from the brain interstitial fluid, including soluble beta-amyloid peptides derived from APP. Plays a redundant role in urinary water homeostasis and urinary concentrating ability. The protein is Aquaporin-4 (AQP4) of Notomys alexis (Spinifex hopping mouse).